Here is a 649-residue protein sequence, read N- to C-terminus: MFEIKARDAMGRLGVITINGKKIETPTIMPVIHPNPKKQTVSMDLINKMADVVITNSYITYTTPELREIAETKGIHELIDFKNVVVTDSGSFQLSVYGDVNVGPMEIIDFQEKIGVDVGTILDIPTGPDVSREKAESDLLETFKRAEDSIKRRKEMGYKLALNGTIQGSKYLDLRQKSADVMGKMDFDIYPIGAVVPLMEDYRYREVAEVILNSKMHLPTNKPVHLFGCGHPMLFALSVALGCDLFDSAAYALYAKNGRYLTADGTLHLEDMKDLKNFPCTCKVCSEYTPKQLFNLEEKEKTRLLAEHNLYVTFEEIDRIKNAIKEGNLWELVEERCRSHPKLLNGLRVISKYMDFIEKHDPVSKKSGFFYTGYESMNRPEIYRHKQRLERIQYDKIYVTTVSENTSKPYHENLDNVPCDVDVLIKDSVFGLVPLNIDTMYPLAQNEVPDLYDFEKKYNNEFVSNFMEKNSEKILDISTYNYYINHYGTKKECDKINPDVFRVGKMLEYQYGAKILDDELMEKVKTRRSKNTGRIRNLLLEKEVLFTLRANDNFLIPAKSGAELLHEKLEFPKYRIVIDSSVEEYARAGKSVYSKFVKDCDPELRPFEEVLIVNSDDELLAYGTTILNGLELMEFDYGVAATLRGGLKK.

D88 serves as the catalytic Nucleophile. Residues D123 and A194 each contribute to the substrate site. Positions 280, 282, and 285 each coordinate Zn(2+). In terms of domain architecture, PUA spans 573–648 (KYRIVIDSSV…VAATLRGGLK (76 aa)).

It belongs to the archaeosine tRNA-ribosyltransferase family. It depends on Zn(2+) as a cofactor.

The catalysed reaction is guanosine(15) in tRNA + 7-cyano-7-deazaguanine = 7-cyano-7-carbaguanosine(15) in tRNA + guanine. Its pathway is tRNA modification; archaeosine-tRNA biosynthesis. In terms of biological role, exchanges the guanine residue with 7-cyano-7-deazaguanine (preQ0) at position 15 in the dihydrouridine loop (D-loop) of archaeal tRNAs. The protein is tRNA-guanine(15) transglycosylase of Methanococcus maripaludis (strain C6 / ATCC BAA-1332).